Reading from the N-terminus, the 99-residue chain is Integration host factor subunit alpha (99 aa).

This sequence belongs to the bacterial histone-like protein family. As to quaternary structure, heterodimer of an alpha and a beta chain.

In terms of biological role, this protein is one of the two subunits of integration host factor, a specific DNA-binding protein that functions in genetic recombination as well as in transcriptional and translational control. This is Integration host factor subunit alpha from Stenotrophomonas maltophilia (strain R551-3).